A 283-amino-acid polypeptide reads, in one-letter code: MILDLFRKQKYITVQPESETREIPEGVWVKCERCGEILFKKELDKNYKVCLKCGFHFRLSAFERIAMTVDEGSFKELDAALLPVNPFNLPDYESKLVSARQSTGLNEAVLTGEAAIEGYPAVVVVMDARFMMASMGTVVGEKITRAAEAAAAGRRPLIIFSASGGARMQEGILSLMQMAKTVAALARLGEEGQLYISVLTDPTTGGVSASFAALGDIVIAEPGALIGFAGPRVIEQTIRQKLPEGFQRAEFLKQHGFVDMIVPRPQMKETLARLLDLHLRGEK.

A CoA carboxyltransferase N-terminal domain is found at 27 to 283; that stretch reads VWVKCERCGE…LLDLHLRGEK (257 aa). 4 residues coordinate Zn(2+): Cys31, Cys34, Cys50, and Cys53. The C4-type zinc-finger motif lies at 31–53; the sequence is CERCGEILFKKELDKNYKVCLKC.

It belongs to the AccD/PCCB family. As to quaternary structure, acetyl-CoA carboxylase is a heterohexamer composed of biotin carboxyl carrier protein (AccB), biotin carboxylase (AccC) and two subunits each of ACCase subunit alpha (AccA) and ACCase subunit beta (AccD). Zn(2+) is required as a cofactor.

It is found in the cytoplasm. The enzyme catalyses N(6)-carboxybiotinyl-L-lysyl-[protein] + acetyl-CoA = N(6)-biotinyl-L-lysyl-[protein] + malonyl-CoA. The protein operates within lipid metabolism; malonyl-CoA biosynthesis; malonyl-CoA from acetyl-CoA: step 1/1. Component of the acetyl coenzyme A carboxylase (ACC) complex. Biotin carboxylase (BC) catalyzes the carboxylation of biotin on its carrier protein (BCCP) and then the CO(2) group is transferred by the transcarboxylase to acetyl-CoA to form malonyl-CoA. This chain is Acetyl-coenzyme A carboxylase carboxyl transferase subunit beta, found in Pelotomaculum thermopropionicum (strain DSM 13744 / JCM 10971 / SI).